Here is a 282-residue protein sequence, read N- to C-terminus: DNA-dependent metalloprotease WSS1 homolog 2 (282 aa).

The region spanning 1–75 (MELKFSCRGN…CLIRQDKDIV (75 aa)) is the Ubiquitin-like domain. Residues 99–274 (PHTTPKPASI…LLAAAERRKQ (176 aa)) form the WLM domain. His-202 lines the Zn(2+) pocket. Residue Glu-203 is part of the active site. Residues His-206 and His-212 each contribute to the Zn(2+) site. The segment at 234–282 (GKPGSYVSDRASYTPQQDNDDEDQKNHRRDLLLAAAERRKQSGSKVQKE) is disordered. The span at 269-282 (AERRKQSGSKVQKE) shows a compositional bias: basic and acidic residues.

This sequence belongs to the peptidase M3 family. WSS1-like metalloprotease (WLM) subfamily. Zn(2+) serves as cofactor.

The protein resides in the cytoplasm. Its subcellular location is the nucleus. Metalloendopeptidase that acts selectively on DNA-binding proteins. DNA is needed to bring the protease and substrates together to enable proteolysis. Involved in the repair of toxic DNA-protein cross-links (DPCs) such as covalently trapped topoisomerase 1 (TOP1) adducts on DNA lesions or DPCs induced by reactive compounds such as formaldehyde. The chain is DNA-dependent metalloprotease WSS1 homolog 2 from Schizosaccharomyces pombe (strain 972 / ATCC 24843) (Fission yeast).